A 300-amino-acid chain; its full sequence is N-acetylmuramic acid 6-phosphate etherase (300 aa).

The SIS domain occupies 57–220; the sequence is IAVAFQSGGR…TTGAMIRTGK (164 aa). Glu-85 functions as the Proton donor in the catalytic mechanism. Glu-116 is an active-site residue.

The protein belongs to the GCKR-like family. MurNAc-6-P etherase subfamily. In terms of assembly, homodimer.

It carries out the reaction N-acetyl-D-muramate 6-phosphate + H2O = N-acetyl-D-glucosamine 6-phosphate + (R)-lactate. Its pathway is amino-sugar metabolism; 1,6-anhydro-N-acetylmuramate degradation. It functions in the pathway amino-sugar metabolism; N-acetylmuramate degradation. The protein operates within cell wall biogenesis; peptidoglycan recycling. In terms of biological role, specifically catalyzes the cleavage of the D-lactyl ether substituent of MurNAc 6-phosphate, producing GlcNAc 6-phosphate and D-lactate. Together with AnmK, is also required for the utilization of anhydro-N-acetylmuramic acid (anhMurNAc) either imported from the medium or derived from its own cell wall murein, and thus plays a role in cell wall recycling. In Aliivibrio fischeri (strain ATCC 700601 / ES114) (Vibrio fischeri), this protein is N-acetylmuramic acid 6-phosphate etherase.